The sequence spans 336 residues: Casein kinase II subunit alpha (336 aa).

A Protein kinase domain is found at 32 to 317 (YEVVRKIGRG…AKEAMAHPYF (286 aa)). Residues 38-46 (IGRGKYSEV) and K61 contribute to the ATP site. The active-site Proton acceptor is D149.

This sequence belongs to the protein kinase superfamily. Ser/Thr protein kinase family. CK2 subfamily. As to quaternary structure, tetramer composed of two alpha chains, one beta chain and one beta' chain.

The catalysed reaction is L-seryl-[protein] + ATP = O-phospho-L-seryl-[protein] + ADP + H(+). The enzyme catalyses L-threonyl-[protein] + ATP = O-phospho-L-threonyl-[protein] + ADP + H(+). Its function is as follows. Catalytic subunit of a constitutively active serine/threonine-protein kinase complex that phosphorylates a large number of substrates containing acidic residues C-terminal to the phosphorylated serine or threonine. Phosphorylates the frq clock protein thus regulating the circadian clock. The polypeptide is Casein kinase II subunit alpha (cka) (Neurospora crassa (strain ATCC 24698 / 74-OR23-1A / CBS 708.71 / DSM 1257 / FGSC 987)).